The primary structure comprises 622 residues: Chaperone protein HscA homolog (622 aa).

This sequence belongs to the heat shock protein 70 family.

Chaperone involved in the maturation of iron-sulfur cluster-containing proteins. Has a low intrinsic ATPase activity which is markedly stimulated by HscB. This chain is Chaperone protein HscA homolog, found in Acidovorax ebreus (strain TPSY) (Diaphorobacter sp. (strain TPSY)).